We begin with the raw amino-acid sequence, 335 residues long: Zinc-type alcohol dehydrogenase-like protein SAV2186 (335 aa).

The protein belongs to the zinc-containing alcohol dehydrogenase family. Quinone oxidoreductase subfamily.

In Staphylococcus aureus (strain Mu50 / ATCC 700699), this protein is Zinc-type alcohol dehydrogenase-like protein SAV2186.